Here is a 752-residue protein sequence, read N- to C-terminus: Ribosomal RNA large subunit methyltransferase K/L (752 aa).

Residues 53-164 form the THUMP domain; that stretch reads QMYKICLWTR…RDELHISIDL (112 aa).

It belongs to the methyltransferase superfamily. RlmKL family.

It localises to the cytoplasm. The catalysed reaction is guanosine(2445) in 23S rRNA + S-adenosyl-L-methionine = N(2)-methylguanosine(2445) in 23S rRNA + S-adenosyl-L-homocysteine + H(+). The enzyme catalyses guanosine(2069) in 23S rRNA + S-adenosyl-L-methionine = N(2)-methylguanosine(2069) in 23S rRNA + S-adenosyl-L-homocysteine + H(+). Functionally, specifically methylates the guanine in position 2445 (m2G2445) and the guanine in position 2069 (m7G2069) of 23S rRNA. In Saccharophagus degradans (strain 2-40 / ATCC 43961 / DSM 17024), this protein is Ribosomal RNA large subunit methyltransferase K/L.